The following is a 955-amino-acid chain: Anoctamin-4 (955 aa).

Over 1–352 the chain is Extracellular; it reads MEASSSGITN…FGEKIGLYFA (352 aa). The interval 72-100 is disordered; it reads CKDDDSLLHPGNLTSTSDDASRLEAGGET. 4 N-linked (GlcNAc...) asparagine glycosylation sites follow: N83, N105, N257, and N288. The helical transmembrane segment at 353–373 threads the bilayer; the sequence is WLGWYTGMLFPAAFIGLFVFL. Residues 374 to 424 are Cytoplasmic-facing; sequence YGVTTLDHSQVSKEVCQATDIIMCPVCDKYCPFMRLSDSCVYAKVTHLFDN. Residues 425–445 traverse the membrane as a helical segment; the sequence is GATVFFAVFMAVWATVFLEFW. Residues 446–505 lie on the Extracellular side of the membrane; that stretch reads KRRRAVIAYDWDLIDWEEEEEEIRPQFEAKYSKKERMNPISGKPEPYQAFTDKCSRLIVS. A helical transmembrane segment spans residues 506–526; the sequence is ASGIFFMICVVIAAVFGIVIY. The Cytoplasmic segment spans residues 527–547; the sequence is RVVTVSTFAAFKWALIRNNSQ. A helical transmembrane segment spans residues 548–568; sequence VATTGTAVCINFCIIMLLNVL. Topologically, residues 569–595 are extracellular; sequence YEKVALLLTNLEQPRTESEWENSFTLK. The chain crosses the membrane as a helical span at residues 596–616; the sequence is MFLFQFVNLNSSTFYIAFFLG. Over 617–715 the chain is Cytoplasmic; sequence RFTGHPGAYL…AYGLFDEYLE (99 aa). Residues 716–736 traverse the membrane as a helical segment; sequence MILQFGFTTIFVAAFPLAPLL. Over 737-768 the chain is Extracellular; sequence ALLNNIIEIRLDAYKFVTQWRRPLASRAKDIG. The chain crosses the membrane as a helical span at residues 769-789; that stretch reads IWYGILEGIGILSVITNAFVI. The Cytoplasmic segment spans residues 790-885; sequence AITSDFIPRL…QFWHVLAARL (96 aa). The helical transmembrane segment at 886 to 906 threads the bilayer; sequence AFIIVFEHLVFCIKHLISYLI. Topologically, residues 907-955 are extracellular; it reads PDLPKDLRDRMRREKYLIQEMMYEAELERLQKERKERKKNGKAHHNEWP.

Belongs to the anoctamin family.

Its subcellular location is the cell membrane. The catalysed reaction is a 1,2-diacyl-sn-glycero-3-phospho-L-serine(in) = a 1,2-diacyl-sn-glycero-3-phospho-L-serine(out). It carries out the reaction a beta-D-galactosyl-(1&lt;-&gt;1')-N-acylsphing-4-enine(out) = a beta-D-galactosyl-(1&lt;-&gt;1')-N-acylsphing-4-enine(in). It catalyses the reaction a 1,2-diacyl-sn-glycero-3-phosphocholine(in) = a 1,2-diacyl-sn-glycero-3-phosphocholine(out). Its function is as follows. Has calcium-dependent phospholipid scramblase activity; scrambles phosphatidylserine, phosphatidylcholine and galactosylceramide. Does not exhibit calcium-activated chloride channel (CaCC) activity. The sequence is that of Anoctamin-4 (ANO4) from Homo sapiens (Human).